The primary structure comprises 151 residues: Proteolipid protein 2 (151 aa).

Residues 19–137 (FSRTKKGILL…DAYITFPLKQ (119 aa)) form the MARVEL domain. 4 consecutive transmembrane segments (helical) span residues 25-45 (GILL…FSAS), 48-68 (AYSS…VFYM), 85-105 (FFRS…VLVE), and 112-132 (IVAG…AYIT).

The protein localises to the membrane. Functionally, may play a role in cell differentiation in the intestinal epithelium. The sequence is that of Proteolipid protein 2 (Plp2) from Rattus norvegicus (Rat).